The chain runs to 478 residues: Proline--tRNA ligase (478 aa).

It belongs to the class-II aminoacyl-tRNA synthetase family. ProS type 3 subfamily. As to quaternary structure, homodimer.

It localises to the cytoplasm. The enzyme catalyses tRNA(Pro) + L-proline + ATP = L-prolyl-tRNA(Pro) + AMP + diphosphate. In terms of biological role, catalyzes the attachment of proline to tRNA(Pro) in a two-step reaction: proline is first activated by ATP to form Pro-AMP and then transferred to the acceptor end of tRNA(Pro). The polypeptide is Proline--tRNA ligase (Clostridium botulinum (strain ATCC 19397 / Type A)).